The chain runs to 339 residues: Ribosome biogenesis protein BRX1 homolog (339 aa).

The tract at residues 1–34 is disordered; it reads MSAYKRKRGSLPEVATNTKKAKKQLAGSEQEATA. Residues 53 to 242 form the Brix domain; it reads ERVLIFSSRG…LIKIFKGSFG (190 aa). Residues 304 to 339 are disordered; it reads AEEKPQVIETEPPAPKPKMKRKDKQFKRQRMAKKRM. Residues 320-339 are compositionally biased toward basic residues; it reads PKMKRKDKQFKRQRMAKKRM.

This sequence belongs to the BRX1 family. Ubiquitous.

It is found in the nucleus. The protein resides in the nucleolus. In terms of biological role, required for biogenesis of the 60S ribosomal subunit. This Xenopus laevis (African clawed frog) protein is Ribosome biogenesis protein BRX1 homolog (brix1).